Reading from the N-terminus, the 439-residue chain is Glutamate--tRNA ligase 1 (439 aa).

The short motif at 6-16 is the 'HIGH' region element; that stretch reads PSPTGDMHIGN. Positions 232–236 match the 'KMSKS' region motif; that stretch reads KMSKR. Lys-235 contacts ATP.

The protein belongs to the class-I aminoacyl-tRNA synthetase family. Glutamate--tRNA ligase type 1 subfamily. Monomer.

It localises to the cytoplasm. It carries out the reaction tRNA(Glu) + L-glutamate + ATP = L-glutamyl-tRNA(Glu) + AMP + diphosphate. Catalyzes the attachment of glutamate to tRNA(Glu) in a two-step reaction: glutamate is first activated by ATP to form Glu-AMP and then transferred to the acceptor end of tRNA(Glu). This Helicobacter acinonychis (strain Sheeba) protein is Glutamate--tRNA ligase 1.